Consider the following 142-residue polypeptide: VapC ribonuclease R02377 (142 aa).

The region spanning 3 to 140 (FVDGSVIVAI…YKGNDFSQTD (138 aa)) is the PINc domain. 2 residues coordinate Mg(2+): D5 and D115.

Belongs to the PINc/VapC protein family. It depends on Mg(2+) as a cofactor.

Its function is as follows. Toxic component of a type II toxin-antitoxin (TA) system. An RNase. The chain is VapC ribonuclease R02377 from Rhizobium meliloti (strain 1021) (Ensifer meliloti).